The primary structure comprises 398 residues: Succinate--CoA ligase [ADP-forming] subunit beta (398 aa).

The ATP-grasp domain occupies 9–253; it reads KELLKSYGVA…EAEEDPKELE (245 aa). ATP contacts are provided by residues lysine 46, 53–55, glutamate 108, cysteine 111, and glutamate 116; that span reads GRG. Positions 208 and 222 each coordinate Mg(2+). Substrate is bound by residues asparagine 273 and 330-332; that span reads GIM.

This sequence belongs to the succinate/malate CoA ligase beta subunit family. As to quaternary structure, heterotetramer of two alpha and two beta subunits. Requires Mg(2+) as cofactor.

The catalysed reaction is succinate + ATP + CoA = succinyl-CoA + ADP + phosphate. It carries out the reaction GTP + succinate + CoA = succinyl-CoA + GDP + phosphate. It participates in carbohydrate metabolism; tricarboxylic acid cycle; succinate from succinyl-CoA (ligase route): step 1/1. Succinyl-CoA synthetase functions in the citric acid cycle (TCA), coupling the hydrolysis of succinyl-CoA to the synthesis of either ATP or GTP and thus represents the only step of substrate-level phosphorylation in the TCA. The beta subunit provides nucleotide specificity of the enzyme and binds the substrate succinate, while the binding sites for coenzyme A and phosphate are found in the alpha subunit. This is Succinate--CoA ligase [ADP-forming] subunit beta from Acidiphilium cryptum (strain JF-5).